The following is a 675-amino-acid chain: Protein C-mannosyl-transferase DPY19L1 (675 aa).

The disordered stretch occupies residues methionine 1–arginine 22. 11 consecutive transmembrane segments (helical) span residues leucine 66–methionine 88, alanine 156–isoleucine 176, leucine 186–threonine 208, leucine 236–proline 254, phenylalanine 260–aspartate 279, isoleucine 286–glycine 303, threonine 309–methionine 325, valine 334–leucine 354, valine 414–leucine 434, glycine 449–methionine 469, and leucine 491–alanine 511.

It belongs to the dpy-19 family. In terms of tissue distribution, widely expressed.

The protein resides in the endoplasmic reticulum membrane. The catalysed reaction is L-tryptophyl-[protein] + a di-trans,poly-cis-dolichyl beta-D-mannosyl phosphate = C-alpha-D-mannosyl-L-tryptophyl-[protein] + a di-trans,poly-cis-dolichyl phosphate + H(+). It functions in the pathway protein modification; protein glycosylation. Its function is as follows. C-mannosyltransferase that mediates the C-mannosylation tryptophan residues on target proteins. The reaction occurs on the luminal side of the endoplasmic reticulum and involves the transfer of a mannose unit from a dolichylphosphate mannose (Dol-P-Man) donor to an acceptor protein containing a WxxW consensus sequence. C-mannosylates the first two tryptophans in the WxxWxxWxxC motif in thrombospondin (TSP) type-1 of UNC5A. Regulates neurite extension during development. The polypeptide is Protein C-mannosyl-transferase DPY19L1 (DPY19L1) (Homo sapiens (Human)).